The chain runs to 118 residues: Large ribosomal subunit protein bL20 (118 aa).

Belongs to the bacterial ribosomal protein bL20 family.

In terms of biological role, binds directly to 23S ribosomal RNA and is necessary for the in vitro assembly process of the 50S ribosomal subunit. It is not involved in the protein synthesizing functions of that subunit. The chain is Large ribosomal subunit protein bL20 from Gluconobacter oxydans (strain 621H) (Gluconobacter suboxydans).